Reading from the N-terminus, the 294-residue chain is Nucleotide-binding protein LVIS_0651 (294 aa).

ATP is bound at residue 12–19 (GMSGAGKT). A GTP-binding site is contributed by 62 to 65 (DLRS).

It belongs to the RapZ-like family.

Displays ATPase and GTPase activities. This is Nucleotide-binding protein LVIS_0651 from Levilactobacillus brevis (strain ATCC 367 / BCRC 12310 / CIP 105137 / JCM 1170 / LMG 11437 / NCIMB 947 / NCTC 947) (Lactobacillus brevis).